Reading from the N-terminus, the 466-residue chain is F-box/WD repeat-containing protein 15 (466 aa).

One can recognise an F-box domain in the interval 1–45 (MAIHLPCLPMMKILSYLDAYSLLQAAQVNKDWNELASSDVLWRKL). WD repeat units lie at residues 101-143 (GYAC…ITWK), 146-185 (EQPASIKLLTTLPEMHIAVTVDIQSTIKLWDCHNREALAT), 187-228 (NLKS…LIST), 339-379 (LQCH…KTFQ), and 381-419 (CPEMIVKLSVDPLHVIVICNTGSMDVYAWEERSLLLRKC).

Part of an SCF (SKP1-CUL1-F-box protein) E3 ubiquitin-protein ligase complex. Interacts with KAT7 and SKP1. In terms of tissue distribution, specifically expressed in oocytes from follicles of the medullary region of the ovary.

It localises to the cytoplasm. It is found in the cytosol. Its subcellular location is the endoplasmic reticulum. The protein localises to the nucleus. It participates in protein modification; protein ubiquitination. Its function is as follows. Substrate-recognition component of an SCF (SKP1-CUL1-F-box protein)-type E3 ubiquitin ligase complex. Promotes KAT7 ubiquitination and subsequent degradation in collaboration with MAP2K1 kinase, leading to reduced histone H3K14 acetylation and increased cell proliferation. The protein is F-box/WD repeat-containing protein 15 of Mus musculus (Mouse).